Here is a 53-residue protein sequence, read N- to C-terminus: MLRYSVIFLIIAIIAAVFGFGGIAAGAAEIAKILFYLFLVIFLVSLVLGMIRR.

2 consecutive transmembrane segments (helical) span residues 6–26 (VIFL…IAAG) and 30–50 (IAKI…VLGM).

It belongs to the UPF0391 family.

It localises to the cell membrane. The chain is UPF0391 membrane protein azo1750 from Azoarcus sp. (strain BH72).